The chain runs to 95 residues: Small ubiquitin-related modifier 2-A (95 aa).

A Glycyl lysine isopeptide (Lys-Gly) (interchain with G-Cter in SUMO) cross-link involves residue Lys-11. The region spanning 16–95 is the Ubiquitin-like domain; sequence DHINLKVAGQ…VFQQQTGGSF (80 aa). Gly-93 participates in a covalent cross-link: Glycyl lysine isopeptide (Gly-Lys) (interchain with K-? in acceptor proteins). Positions 94-95 are excised as a propeptide; the sequence is SF.

This sequence belongs to the ubiquitin family. SUMO subfamily. In terms of assembly, interacts with sae2 and ube2i. Covalently attached to a number of proteins, including top2. Polymeric chains can be formed through Lys-11 cross-linking. Post-translationally, cleavage of precursor form by a sentrin-specific protease is necessary for function.

The protein localises to the nucleus. Functionally, ubiquitin-like protein that can be covalently attached to proteins as a monomer or as a lysine-linked polymer. Covalent attachment via an isopeptide bond to its substrates requires prior activation by the E1 complex sae1-sae2 and linkage to the E2 enzyme ube2i, and can be promoted by an E3 ligase such as pias1-4. This post-translational modification on lysine residues of proteins plays a crucial role in a number of cellular processes such as nuclear transport, DNA replication and repair, mitosis and signal transduction. Polymeric sumo2 chains are also susceptible to polyubiquitination which functions as a signal for proteasomal degradation of modified proteins. The polypeptide is Small ubiquitin-related modifier 2-A (sumo2-a) (Xenopus laevis (African clawed frog)).